Reading from the N-terminus, the 218-residue chain is N-(5'-phosphoribosyl)anthranilate isomerase (218 aa).

It belongs to the TrpF family.

It catalyses the reaction N-(5-phospho-beta-D-ribosyl)anthranilate = 1-(2-carboxyphenylamino)-1-deoxy-D-ribulose 5-phosphate. Its pathway is amino-acid biosynthesis; L-tryptophan biosynthesis; L-tryptophan from chorismate: step 3/5. The sequence is that of N-(5'-phosphoribosyl)anthranilate isomerase from Rhodopseudomonas palustris (strain BisB5).